The chain runs to 923 residues: DNA mismatch repair protein PMS1 (923 aa).

3 stretches are compositionally biased toward basic and acidic residues: residues 543 to 553, 565 to 581, and 591 to 601; these read DMTPSERDSEL, NVER…RFEE, and GDVERVSEDNP. The tract at residues 543 to 603 is disordered; that stretch reads DMTPSERDSE…ERVSEDNPRC (61 aa).

This sequence belongs to the DNA mismatch repair MutL/HexB family. As to quaternary structure, heterodimer of MLH1 and PMS1, called MutLalpha, which is the major MMR MutL activity correcting base-base mismatches as well as IDLs. The heterodimer binds double strand DNA independently of a mismatch with positive cooperativity and has more than one DNA binding site. Forms a ternary complex with either the MSH2-MSH6 (MutSalpha) or the MSH2-MSH3 heterodimer (MutSbeta), which recognize and bind to mismatch DNA. Ternary complex formation is promoted by ATP binding. In terms of tissue distribution, expressed at very low levels in mature leaves. Detected in rapidly dividing tissues.

The protein localises to the nucleus. Its function is as follows. Required for DNA mismatch repair (MMR), correcting base-base mismatches and insertion-deletion loops (IDLs) resulting from DNA replication, DNA damage or from recombination events between non-identical sequences during meiosis. Component of the MutLalpha heterodimer that forms a ternary complex with the MutS heterodimers, which initially recognize the DNA mismatches. This complex is thought to be responsible for directing the downstream MMR events, including strand discrimination, excision, and resynthesis. Plays a major role in maintaining the genetic stability of simple sequence repeats and in the repair of heteroduplex sites present in meiotic recombination intermediates. Does not seem to be required for homologous somatic recombination. This is DNA mismatch repair protein PMS1 (PMS1) from Arabidopsis thaliana (Mouse-ear cress).